A 154-amino-acid chain; its full sequence is PTS system fructose-specific EIIA component (154 aa).

A PTS EIIA type-2 domain is found at threonine 8–valine 152. The active-site Tele-phosphohistidine intermediate is the histidine 70. Phosphohistidine; by HPr is present on histidine 70.

It is found in the cytoplasm. The phosphoenolpyruvate-dependent sugar phosphotransferase system (sugar PTS), a major carbohydrate active transport system, catalyzes the phosphorylation of incoming sugar substrates concomitantly with their translocation across the cell membrane. The enzyme II PtfABC PTS system is involved in fructose transport. The sequence is that of PTS system fructose-specific EIIA component from Haloferax volcanii (strain ATCC 29605 / DSM 3757 / JCM 8879 / NBRC 14742 / NCIMB 2012 / VKM B-1768 / DS2) (Halobacterium volcanii).